Here is a 590-residue protein sequence, read N- to C-terminus: V-type ATP synthase alpha chain (590 aa).

231 to 238 (GPFGSGKT) serves as a coordination point for ATP.

The protein belongs to the ATPase alpha/beta chains family.

It catalyses the reaction ATP + H2O + 4 H(+)(in) = ADP + phosphate + 5 H(+)(out). In terms of biological role, produces ATP from ADP in the presence of a proton gradient across the membrane. The V-type alpha chain is a catalytic subunit. In Clostridium botulinum (strain ATCC 19397 / Type A), this protein is V-type ATP synthase alpha chain.